The chain runs to 129 residues: Phosphoribosyl-AMP cyclohydrolase (129 aa).

Asp78 serves as a coordination point for Mg(2+). Cys79 provides a ligand contact to Zn(2+). Mg(2+)-binding residues include Asp80 and Asp82. Residues Cys96 and Cys103 each coordinate Zn(2+).

The protein belongs to the PRA-CH family. In terms of assembly, homodimer. The cofactor is Mg(2+). Requires Zn(2+) as cofactor.

The protein resides in the cytoplasm. The catalysed reaction is 1-(5-phospho-beta-D-ribosyl)-5'-AMP + H2O = 1-(5-phospho-beta-D-ribosyl)-5-[(5-phospho-beta-D-ribosylamino)methylideneamino]imidazole-4-carboxamide. Its pathway is amino-acid biosynthesis; L-histidine biosynthesis; L-histidine from 5-phospho-alpha-D-ribose 1-diphosphate: step 3/9. Catalyzes the hydrolysis of the adenine ring of phosphoribosyl-AMP. In Nitrosomonas eutropha (strain DSM 101675 / C91 / Nm57), this protein is Phosphoribosyl-AMP cyclohydrolase.